A 218-amino-acid polypeptide reads, in one-letter code: Adenylate kinase (218 aa).

10–15 is an ATP binding site; it reads GAGKGT. The segment at 30-59 is NMP; the sequence is STGDMLRAAVKEETPLGRKAKEVMDSGNLV. Residues threonine 31, arginine 36, 57–59, 85–88, and glutamine 92 contribute to the AMP site; these read NLV and GFPR. Residues 122 to 159 are LID; that stretch reads GRRVHPASGRTYHLTFNPPQQQGVDDETGEPLIQRVDD. ATP-binding positions include arginine 123 and 132–133; that span reads TY. Positions 156 and 167 each coordinate AMP. Glycine 203 is an ATP binding site.

Belongs to the adenylate kinase family. Monomer.

It is found in the cytoplasm. It catalyses the reaction AMP + ATP = 2 ADP. It participates in purine metabolism; AMP biosynthesis via salvage pathway; AMP from ADP: step 1/1. In terms of biological role, catalyzes the reversible transfer of the terminal phosphate group between ATP and AMP. Plays an important role in cellular energy homeostasis and in adenine nucleotide metabolism. This is Adenylate kinase from Chlorobium phaeovibrioides (strain DSM 265 / 1930) (Prosthecochloris vibrioformis (strain DSM 265)).